Reading from the N-terminus, the 524-residue chain is Chromosomal replication initiator protein DnaA (524 aa).

The segment at 1–72 (MNDFWQHCSA…DLARDFWNAP (72 aa)) is domain I, interacts with DnaA modulators. The segment at 72–187 (PIEVQFVLDP…GEADSMYERS (116 aa)) is domain II. Residues 188–404 (KLNPVLTFDN…GALRKILAYS (217 aa)) form a domain III, AAA+ region region. ATP is bound by residues Gly-232, Gly-234, Lys-235, and Thr-236. Positions 405 to 524 (KFHGREISIE…LHVLEQTLKG (120 aa)) are domain IV, binds dsDNA.

It belongs to the DnaA family. Oligomerizes as a right-handed, spiral filament on DNA at oriC.

The protein resides in the cytoplasm. In terms of biological role, plays an essential role in the initiation and regulation of chromosomal replication. ATP-DnaA binds to the origin of replication (oriC) to initiate formation of the DNA replication initiation complex once per cell cycle. Binds the DnaA box (a 9 base pair repeat at the origin) and separates the double-stranded (ds)DNA. Forms a right-handed helical filament on oriC DNA; dsDNA binds to the exterior of the filament while single-stranded (ss)DNA is stabiized in the filament's interior. The ATP-DnaA-oriC complex binds and stabilizes one strand of the AT-rich DNA unwinding element (DUE), permitting loading of DNA polymerase. After initiation quickly degrades to an ADP-DnaA complex that is not apt for DNA replication. Binds acidic phospholipids. The chain is Chromosomal replication initiator protein DnaA from Burkholderia multivorans (strain ATCC 17616 / 249).